A 118-amino-acid polypeptide reads, in one-letter code: Beta-elicitin cryptogein (118 aa).

The first 20 residues, 1–20 (MNFTALLAAVAAALVGSANA), serve as a signal peptide directing secretion. 3 disulfide bridges follow: Cys23–Cys91, Cys47–Cys76, and Cys71–Cys115.

It belongs to the elicitin family.

The protein localises to the secreted. Induces local and distal defense responses (incompatible hypersensitive reaction) in plants from the solanaceae and cruciferae families. Elicits leaf necrosis and causes the accumulation of pathogenesis-related proteins. Might interact with the lipidic molecules of the plasma membrane. The sequence is that of Beta-elicitin cryptogein from Phytophthora cryptogea.